A 141-amino-acid polypeptide reads, in one-letter code: Large ribosomal subunit protein uL11 (141 aa).

The protein belongs to the universal ribosomal protein uL11 family. Part of the ribosomal stalk of the 50S ribosomal subunit. Interacts with L10 and the large rRNA to form the base of the stalk. L10 forms an elongated spine to which L12 dimers bind in a sequential fashion forming a multimeric L10(L12)X complex. In terms of processing, one or more lysine residues are methylated.

Functionally, forms part of the ribosomal stalk which helps the ribosome interact with GTP-bound translation factors. The sequence is that of Large ribosomal subunit protein uL11 from Chlamydia pneumoniae (Chlamydophila pneumoniae).